A 251-amino-acid chain; its full sequence is Hydroxyacylglutathione hydrolase (251 aa).

His-53, His-55, Asp-57, His-58, His-110, Asp-127, and His-165 together coordinate Zn(2+).

It belongs to the metallo-beta-lactamase superfamily. Glyoxalase II family. In terms of assembly, monomer. Requires Zn(2+) as cofactor.

It catalyses the reaction an S-(2-hydroxyacyl)glutathione + H2O = a 2-hydroxy carboxylate + glutathione + H(+). It functions in the pathway secondary metabolite metabolism; methylglyoxal degradation; (R)-lactate from methylglyoxal: step 2/2. Functionally, thiolesterase that catalyzes the hydrolysis of S-D-lactoyl-glutathione to form glutathione and D-lactic acid. This Salmonella typhi protein is Hydroxyacylglutathione hydrolase.